Here is a 410-residue protein sequence, read N- to C-terminus: 3-phosphoshikimate 1-carboxyvinyltransferase (410 aa).

Residues Lys27, Ser28, and Arg32 each contribute to the 3-phosphoshikimate site. Lys27 serves as a coordination point for phosphoenolpyruvate. Phosphoenolpyruvate-binding residues include Gly91 and Arg119. The 3-phosphoshikimate site is built by Ser161, Ser162, Gln163, Asp297, Gln319, and Lys323. Gln163 is a phosphoenolpyruvate binding site. The active-site Proton acceptor is the Asp297. Phosphoenolpyruvate-binding residues include Arg327, Arg368, and Lys394.

This sequence belongs to the EPSP synthase family. In terms of assembly, monomer.

Its subcellular location is the cytoplasm. The enzyme catalyses 3-phosphoshikimate + phosphoenolpyruvate = 5-O-(1-carboxyvinyl)-3-phosphoshikimate + phosphate. The protein operates within metabolic intermediate biosynthesis; chorismate biosynthesis. Its function is as follows. Catalyzes the transfer of the enolpyruvyl moiety of phosphoenolpyruvate (PEP) to the 5-hydroxyl of shikimate-3-phosphate (S3P) to produce enolpyruvyl shikimate-3-phosphate and inorganic phosphate. In Pyrococcus abyssi (strain GE5 / Orsay), this protein is 3-phosphoshikimate 1-carboxyvinyltransferase.